The chain runs to 1202 residues: Metabotropic glycine receptor (1202 aa).

Positions 1–24 are cleaved as a signal peptide; sequence MGAMAYSLLLCLLLAHLGLGEVGA. The segment at 25–62 is disordered; the sequence is SLDPSERPDSSRERTSRGKQHGQQLPRASAPDPSIPWS. At 25 to 417 the chain is on the extracellular side; the sequence is SLDPSERPDS…CFVQEDKYLR (393 aa). Residues 28–40 show a composition bias toward basic and acidic residues; that stretch reads PSERPDSSRERTS. Residues 85–281 are cache-like region; sequence YLYTGDFHQL…CENGSYKPGW (197 aa). N-linked (GlcNAc...) asparagine glycans are attached at residues N98 and N143. A disulfide bond links C99 and C272. The glycine site is built by S172 and R173. N215 carries N-linked (GlcNAc...) asparagine glycosylation. Residues 234 to 253 form a disordered region; the sequence is LHRRGSNQGPRGLGHSWRRR. Position 271 (E271) interacts with glycine. A glycan (N-linked (GlcNAc...) asparagine) is linked at N274. Glycine is bound at residue D307. N-linked (GlcNAc...) asparagine glycosylation is present at N333. The chain crosses the membrane as a helical span at residues 418 to 439; sequence LAIISFQALCMLLDFVSMLVVY. Residues 440-451 are Cytoplasmic-facing; the sequence is HFRKAKSIRASG. A helical transmembrane segment spans residues 452–474; sequence LILLETILFGSLLLYFPVVILYF. At 475-478 the chain is on the extracellular side; it reads EPST. The chain crosses the membrane as a helical span at residues 479–501; the sequence is FRCILLRWVRLLGFATVYGTVTL. Cysteines 481 and 573 form a disulfide. The Cytoplasmic segment spans residues 502–525; that stretch reads KLHRVLKVFLSRTAQRIPYMTGGR. A helical transmembrane segment spans residues 526 to 547; that stretch reads VMRMLAVIVLVVFWFLVGWTSS. The Extracellular segment spans residues 548–576; it reads MCQNLERDILLVGQGQTSDNLTFNMCLID. A helical transmembrane segment spans residues 577-597; it reads RWDYMTAVAEFLFLLWGIYLC. At 598 to 611 the chain is on the cytoplasmic side; the sequence is YAVRTVPSAFHEPR. A helical transmembrane segment spans residues 612–633; it reads YMAVAVHNELIITAIFHTIRFV. Residues 634–642 are Extracellular-facing; that stretch reads LASRLQPDW. The helical transmembrane segment at 643–664 threads the bilayer; the sequence is MLMLYFAHTHLTVTVTIGLLLI. Over 665–1202 the chain is Cytoplasmic; it reads PKFSHSSNNP…SASKIPGPRK (538 aa). 3 positions are modified to phosphoserine: S694, S705, and S708. Disordered regions lie at residues 757–899 and 914–995; these read RITE…TSML and LGLA…QIKD. Basic and acidic residues-rich tracts occupy residues 769–781 and 819–828; these read CSKE…DHSA and STYDHVRDQT. Residue K774 forms a Glycyl lysine isopeptide (Lys-Gly) (interchain with G-Cter in ubiquitin) linkage. Low complexity predominate over residues 845–856; it reads ENSTLESLSSKK. Phosphoserine is present on S865. The segment covering 925–943 has biased composition (basic and acidic residues); sequence MEDRAKSQKPQPKDRETNR. 2 stretches are compositionally biased toward polar residues: residues 944-958 and 975-994; these read KYSN…PNSN and QRVN…TQIK. S946 bears the Phosphoserine mark. The short motif at 1002–1006 is the VCPWE motif 1 element; it reads VCPWE. At S1061 the chain carries Phosphoserine. The VCPWE motif 2 motif lies at 1067 to 1071; that stretch reads VCPWE. The residue at position 1076 (S1076) is a Phosphoserine. 2 stretches are compositionally biased toward polar residues: residues 1132–1144 and 1151–1162; these read QMGD…SSSV and CISSNNSPQPLT. Residues 1132-1162 form a disordered region; that stretch reads QMGDQEKQTSSSVDIIPGSCISSNNSPQPLT. The short motif at 1167 to 1171 is the VCPWE motif 3 element; that stretch reads VCPWE.

Belongs to the G-protein coupled receptor 3 family. Homodimer. Associates with the RGS7-GNB5 complex, promoting its localization to the cell membrane and regulating its GTPase activator activity. Interacts (via VCPWE motifs) with GNAO1. Interacts with GPC4. Interacts with EGFLAM.

It is found in the cell membrane. It localises to the postsynaptic cell membrane. Its subcellular location is the presynaptic cell membrane. The protein localises to the nucleus. Its function is as follows. Metabotropic receptor for glycine that controls synapse formation and function in the brain. Acts as an atypical G-protein coupled receptor that recruits and regulates the RGS7-GNB5 complex instead of activating G proteins. In absence of glycine ligand, promotes the GTPase activator activity of RGS7, increasing the GTPase activity of G protein alpha subunits, thereby driving them into their inactive GDP-bound form. Glycine-binding changes the conformation of the intracellular surface, inhibiting the GTPase activator activity of the RGS7-GNB5 complex, promoting G protein alpha subunits into their active GTP-bound form and regulating cAMP levels. Also able to bind taurine, a compound closely related to glycine, but with a two-fold lower affinity. Glycine receptor-dependent regulation of cAMP controls key ion channels, kinases and neurotrophic factors involved in neuronal excitability and synaptic transmission. Plays a pivotal role in regulating mood and cognition via its ability to regulate neuronal excitability in L2/L3 pyramidal neurons of the prefrontal cortex. Also involved in spatial learning by regulating hippocampal CA1 neuronal excitability. Acts as a synaptic organizer in the hippocampus, required for proper mossy fiber-CA3 neurocircuitry establishment, structure and function: induces presynaptic differentiation in contacting axons via its interaction with GPC4. In addition to glycine, may also act as a receptor for osteocalcin (BGLAP) hormone: osteocalcin-binding initiates a signaling response that prevents neuronal apoptosis in the hippocampus and regulates the synthesis of neurotransmitters. The chain is Metabotropic glycine receptor from Rattus norvegicus (Rat).